Here is a 212-residue protein sequence, read N- to C-terminus: Probable transaldolase (212 aa).

The active-site Schiff-base intermediate with substrate is the K84.

It belongs to the transaldolase family. Type 3B subfamily.

The protein localises to the cytoplasm. It carries out the reaction D-sedoheptulose 7-phosphate + D-glyceraldehyde 3-phosphate = D-erythrose 4-phosphate + beta-D-fructose 6-phosphate. It participates in carbohydrate degradation; pentose phosphate pathway; D-glyceraldehyde 3-phosphate and beta-D-fructose 6-phosphate from D-ribose 5-phosphate and D-xylulose 5-phosphate (non-oxidative stage): step 2/3. Functionally, transaldolase is important for the balance of metabolites in the pentose-phosphate pathway. This is Probable transaldolase from Bacillus pumilus (strain SAFR-032).